A 599-amino-acid polypeptide reads, in one-letter code: Elongation factor 4 (599 aa).

Residues 5–187 (DLIRNFSIVA…AIVTRLPPPK (183 aa)) enclose the tr-type G domain. GTP contacts are provided by residues 17 to 22 (DHGKST) and 134 to 137 (NKID).

It belongs to the TRAFAC class translation factor GTPase superfamily. Classic translation factor GTPase family. LepA subfamily.

The protein resides in the cell inner membrane. It catalyses the reaction GTP + H2O = GDP + phosphate + H(+). In terms of biological role, required for accurate and efficient protein synthesis under certain stress conditions. May act as a fidelity factor of the translation reaction, by catalyzing a one-codon backward translocation of tRNAs on improperly translocated ribosomes. Back-translocation proceeds from a post-translocation (POST) complex to a pre-translocation (PRE) complex, thus giving elongation factor G a second chance to translocate the tRNAs correctly. Binds to ribosomes in a GTP-dependent manner. This chain is Elongation factor 4, found in Cereibacter sphaeroides (strain ATCC 17025 / ATH 2.4.3) (Rhodobacter sphaeroides).